Reading from the N-terminus, the 294-residue chain is Putative glucose-6-phosphate 1-epimerase (294 aa).

The substrate site is built by R74 and R99. H164 is a catalytic residue. D208 contributes to the substrate binding site. E267 is an active-site residue.

It belongs to the glucose-6-phosphate 1-epimerase family. In terms of assembly, monomer in solution.

It catalyses the reaction alpha-D-glucose 6-phosphate = beta-D-glucose 6-phosphate. In terms of biological role, probably functions as a hexose-6-phosphate 1-epimerase. The sequence is that of Putative glucose-6-phosphate 1-epimerase from Salmonella typhimurium (strain LT2 / SGSC1412 / ATCC 700720).